The following is an 84-amino-acid chain: MAHKKGAGSTKNGRDSKPKMLGVKRFAGEKVNSGTIIVRQRGTHIHPGENVGLGRDYTIFATCEGVVKFEPTTNDRRKVSVVAD.

The tract at residues 1-21 (MAHKKGAGSTKNGRDSKPKML) is disordered.

It belongs to the bacterial ribosomal protein bL27 family.

The protein is Large ribosomal subunit protein bL27 of Dehalococcoides mccartyi (strain ATCC BAA-2100 / JCM 16839 / KCTC 5957 / BAV1).